Consider the following 503-residue polypeptide: Aspartyl/glutamyl-tRNA(Asn/Gln) amidotransferase subunit B (503 aa).

This sequence belongs to the GatB/GatE family. GatB subfamily. As to quaternary structure, heterotrimer of A, B and C subunits.

The enzyme catalyses L-glutamyl-tRNA(Gln) + L-glutamine + ATP + H2O = L-glutaminyl-tRNA(Gln) + L-glutamate + ADP + phosphate + H(+). It catalyses the reaction L-aspartyl-tRNA(Asn) + L-glutamine + ATP + H2O = L-asparaginyl-tRNA(Asn) + L-glutamate + ADP + phosphate + 2 H(+). Allows the formation of correctly charged Asn-tRNA(Asn) or Gln-tRNA(Gln) through the transamidation of misacylated Asp-tRNA(Asn) or Glu-tRNA(Gln) in organisms which lack either or both of asparaginyl-tRNA or glutaminyl-tRNA synthetases. The reaction takes place in the presence of glutamine and ATP through an activated phospho-Asp-tRNA(Asn) or phospho-Glu-tRNA(Gln). In Nocardia farcinica (strain IFM 10152), this protein is Aspartyl/glutamyl-tRNA(Asn/Gln) amidotransferase subunit B.